The chain runs to 188 residues: MVLVYGGSFNPPTIAHEAIIHKLHEEFKPKKILIVPTGNYFSWKTDLIDFEHRFKMVELMTQHLDYVEISRLENTKAFLGSYHTLNELSKRYDDLYFVVGADHIKTLDQWKDYKKLIENYKFILLTRNNYTFDDDLLSKLGLKYEKMMFQSDISSSEIRKNLNQNLDKLNLNVKTYILENKLYEEVKV.

Belongs to the NadD family.

The enzyme catalyses nicotinate beta-D-ribonucleotide + ATP + H(+) = deamido-NAD(+) + diphosphate. Its pathway is cofactor biosynthesis; NAD(+) biosynthesis; deamido-NAD(+) from nicotinate D-ribonucleotide: step 1/1. In terms of biological role, catalyzes the reversible adenylation of nicotinate mononucleotide (NaMN) to nicotinic acid adenine dinucleotide (NaAD). This chain is Probable nicotinate-nucleotide adenylyltransferase, found in Acholeplasma laidlawii (strain PG-8A).